The following is a 625-amino-acid chain: Glucose dehydrogenase [FAD, quinone] (625 aa).

An N-terminal signal peptide occupies residues 1-42 (MSASASACDCLVGVPTGPTLASTCGGSAFMLFMGLLEVFIRS). 66 to 95 (DFIVIGGGSAGSVVASRLSEVPQWKVLLIE) is a binding site for FAD. H544 serves as the catalytic Proton acceptor. U613 is a non-standard amino acid (selenocysteine).

This sequence belongs to the GMC oxidoreductase family. It depends on FAD as a cofactor.

The protein resides in the secreted. It catalyses the reaction a quinone + D-glucose = D-glucono-1,5-lactone + a quinol. In terms of biological role, essential for cuticular modification during development. The polypeptide is Glucose dehydrogenase [FAD, quinone] (Gld) (Drosophila melanogaster (Fruit fly)).